Here is a 152-residue protein sequence, read N- to C-terminus: Endoribonuclease YbeY (152 aa).

Zn(2+)-binding residues include His-113, His-117, and His-123.

It belongs to the endoribonuclease YbeY family. Zn(2+) serves as cofactor.

The protein resides in the cytoplasm. Its function is as follows. Single strand-specific metallo-endoribonuclease involved in late-stage 70S ribosome quality control and in maturation of the 3' terminus of the 16S rRNA. In Delftia acidovorans (strain DSM 14801 / SPH-1), this protein is Endoribonuclease YbeY.